A 699-amino-acid polypeptide reads, in one-letter code: Elongation factor G (699 aa).

Residues 8–289 form the tr-type G domain; that stretch reads ERYRNIGISA…AVVEYMPAPT (282 aa). GTP-binding positions include 17-24, 88-92, and 142-145; these read AHIDAGKT, DTPGH, and NKMD.

This sequence belongs to the TRAFAC class translation factor GTPase superfamily. Classic translation factor GTPase family. EF-G/EF-2 subfamily.

The protein localises to the cytoplasm. In terms of biological role, catalyzes the GTP-dependent ribosomal translocation step during translation elongation. During this step, the ribosome changes from the pre-translocational (PRE) to the post-translocational (POST) state as the newly formed A-site-bound peptidyl-tRNA and P-site-bound deacylated tRNA move to the P and E sites, respectively. Catalyzes the coordinated movement of the two tRNA molecules, the mRNA and conformational changes in the ribosome. The protein is Elongation factor G of Variovorax paradoxus (strain S110).